An 816-amino-acid polypeptide reads, in one-letter code: MSDRCKIYYQSLYLFVKIFIKSKLIPKNFVTDSGLDSSSPIFYILPSRSKMDLIILREESLKQGLPDPLTPLKVDEIQIPRYLFIDDIKESHGHSPSSAETLFSRYLGLYSKNSTLDITILPVSVMIGRRPISICQNRKINRLQKFFTAFWLGRDSFVHFSNPISLSRIINAHSKDLRIVYKLARVARIHFFRQYLSSVGRALPVHSDLFKKLLSSEAIEKALLDEARSKKISPQKAHDNALRLMKEIASQVSYETIRLSDRVLGWMWNRFYQGIHVHNADCVRQLAYKGHSIVYVPCHRSHMDYLLLSYVLYYEGLATPHIAAGINLNFWPAGAIFRRLGAFFIRRNFKGNKLYSTIFRAYLDELFTGGYPVEYFIEGGRSRTGLLLEPKTGTLSMTIQAMLRDISPSITLIPVYIGYEHVIEVLSYTKELRGERKKKENFFQMIGGLRQLRHLGQGYVNFGEPIQLKLYLDKNVPDWRESIRPINKIEATRPHWLASTVKDLAYQIMININHAAAINAINLCSTALLASENQALTRPELLEQLNCYLQLMRHAPHNQYSSVTDQMPEELLDHALHMNKFVVQKNHPHERICLPKEQVPLMRYYRNNIQHLLILPSLIATTVLCHHNISRQEIIRQITLLYPVFKIRWFLYYSEKQLLEALNLLMDELIRQKCVENKNHHFVVNLSSGMMTLKILASGIKEILQHYSIIFFLLTVYPDIDRKSLEKESRAMAKHLCILENMPSAEFFHSSIFSGLLTLLFEKREKMVSNDYSAQKNIEEIFNILKGLISSQMISVMQENFSLKKEWLTYKKKTTD.

The HXXXXD motif motif lies at 298–303 (CHRSHM).

The protein belongs to the GPAT/DAPAT family.

The protein localises to the cell membrane. The enzyme catalyses sn-glycerol 3-phosphate + an acyl-CoA = a 1-acyl-sn-glycero-3-phosphate + CoA. The protein operates within phospholipid metabolism; CDP-diacylglycerol biosynthesis; CDP-diacylglycerol from sn-glycerol 3-phosphate: step 1/3. The protein is Glycerol-3-phosphate acyltransferase of Hamiltonella defensa subsp. Acyrthosiphon pisum (strain 5AT).